Consider the following 81-residue polypeptide: RNA-binding protein Hfq (81 aa).

Residues 11 to 71 (DIFLNNARKN…ISTITPTKPI (61 aa)) enclose the Sm domain.

This sequence belongs to the Hfq family. In terms of assembly, homohexamer.

Its function is as follows. RNA chaperone that binds small regulatory RNA (sRNAs) and mRNAs to facilitate mRNA translational regulation in response to envelope stress, environmental stress and changes in metabolite concentrations. Also binds with high specificity to tRNAs. This is RNA-binding protein Hfq from Clostridium beijerinckii (strain ATCC 51743 / NCIMB 8052) (Clostridium acetobutylicum).